The chain runs to 330 residues: Ketol-acid reductoisomerase (NADP(+)) (330 aa).

The 181-residue stretch at 1-181 (MNVYYEKDAD…GGTKAGVIET (181 aa)) folds into the KARI N-terminal Rossmann domain. NADP(+)-binding positions include 24–27 (YGSQ), arginine 47, serine 50, serine 52, and 82–85 (DQNQ). Histidine 107 is a catalytic residue. Glycine 133 serves as a coordination point for NADP(+). Residues 182–327 (NFKNETETDL…AKLRNMMSWL (146 aa)) form the KARI C-terminal knotted domain. Mg(2+) is bound by residues aspartate 190, glutamate 194, glutamate 226, and glutamate 230. Serine 251 provides a ligand contact to substrate.

The protein belongs to the ketol-acid reductoisomerase family. The cofactor is Mg(2+).

It carries out the reaction (2R)-2,3-dihydroxy-3-methylbutanoate + NADP(+) = (2S)-2-acetolactate + NADPH + H(+). The enzyme catalyses (2R,3R)-2,3-dihydroxy-3-methylpentanoate + NADP(+) = (S)-2-ethyl-2-hydroxy-3-oxobutanoate + NADPH + H(+). Its pathway is amino-acid biosynthesis; L-isoleucine biosynthesis; L-isoleucine from 2-oxobutanoate: step 2/4. The protein operates within amino-acid biosynthesis; L-valine biosynthesis; L-valine from pyruvate: step 2/4. Functionally, involved in the biosynthesis of branched-chain amino acids (BCAA). Catalyzes an alkyl-migration followed by a ketol-acid reduction of (S)-2-acetolactate (S2AL) to yield (R)-2,3-dihydroxy-isovalerate. In the isomerase reaction, S2AL is rearranged via a Mg-dependent methyl migration to produce 3-hydroxy-3-methyl-2-ketobutyrate (HMKB). In the reductase reaction, this 2-ketoacid undergoes a metal-dependent reduction by NADPH to yield (R)-2,3-dihydroxy-isovalerate. The sequence is that of Ketol-acid reductoisomerase (NADP(+)) from Chlorobium chlorochromatii (strain CaD3).